The following is a 307-amino-acid chain: uncharacterized protein (307 aa).

The ABC transporter domain maps to 5-233; that stretch reads VQTNGLTKTY…NTEYIELVTP (229 aa). Residue 37–44 coordinates ATP; the sequence is GPNGAGKT.

It belongs to the ABC transporter superfamily.

This is an uncharacterized protein from Bacillus subtilis (strain 168).